We begin with the raw amino-acid sequence, 83 residues long: Apolipoprotein C-I, basic form (83 aa).

The signal sequence occupies residues Met1–Gly26.

It belongs to the apolipoprotein C1 family.

Its subcellular location is the secreted. Functionally, inhibitor of lipoprotein binding to the low density lipoprotein (LDL) receptor, LDL receptor-related protein, and very low density lipoprotein (VLDL) receptor. Associates with high density lipoproteins (HDL) and the triacylglycerol-rich lipoproteins in the plasma and makes up about 10% of the protein of the VLDL and 2% of that of HDL. Appears to interfere directly with fatty acid uptake and is also the major plasma inhibitor of cholesteryl ester transfer protein (CETP). Binds free fatty acids and reduces their intracellular esterification. Modulates the interaction of APOE with beta-migrating VLDL and inhibits binding of beta-VLDL to the LDL receptor-related protein. In Colobus guereza (Mantled guereza), this protein is Apolipoprotein C-I, basic form (APOC1B).